Consider the following 564-residue polypeptide: Sulfite reductase [NADPH] hemoprotein beta-component 1 (564 aa).

[4Fe-4S] cluster is bound by residues C426, C432, C471, and C475. C475 provides a ligand contact to siroheme.

It belongs to the nitrite and sulfite reductase 4Fe-4S domain family. Alpha(8)-beta(8). The alpha component is a flavoprotein, the beta component is a hemoprotein. The cofactor is siroheme. It depends on [4Fe-4S] cluster as a cofactor.

The enzyme catalyses hydrogen sulfide + 3 NADP(+) + 3 H2O = sulfite + 3 NADPH + 4 H(+). Its pathway is sulfur metabolism; hydrogen sulfide biosynthesis; hydrogen sulfide from sulfite (NADPH route): step 1/1. Its function is as follows. Component of the sulfite reductase complex that catalyzes the 6-electron reduction of sulfite to sulfide. This is one of several activities required for the biosynthesis of L-cysteine from sulfate. This Pectobacterium carotovorum subsp. carotovorum (strain PC1) protein is Sulfite reductase [NADPH] hemoprotein beta-component 1.